Here is a 146-residue protein sequence, read N- to C-terminus: MMDINEIREYLPHRYPFLLVDRVVELDTEGKRIRAYKNVSINEPFFNGHFPAHPIMPGVLIIEAMAQAAGILGFKMLDVKPADGTLYYFVGSDKLRFRQPVLPGDQLILEAKFISCKRQIWKFECQASVDGKPVCSAEIICAERKL.

Histidine 49 is a catalytic residue.

This sequence belongs to the thioester dehydratase family. FabZ subfamily.

It localises to the cytoplasm. The catalysed reaction is a (3R)-hydroxyacyl-[ACP] = a (2E)-enoyl-[ACP] + H2O. Functionally, involved in unsaturated fatty acids biosynthesis. Catalyzes the dehydration of short chain beta-hydroxyacyl-ACPs and long chain saturated and unsaturated beta-hydroxyacyl-ACPs. The chain is 3-hydroxyacyl-[acyl-carrier-protein] dehydratase FabZ from Pseudomonas fluorescens (strain Pf0-1).